We begin with the raw amino-acid sequence, 92 residues long: PqqA binding protein (92 aa).

The protein belongs to the PqqD family. In terms of assembly, monomer. Interacts with PqqE.

It participates in cofactor biosynthesis; pyrroloquinoline quinone biosynthesis. Functionally, functions as a PqqA binding protein and presents PqqA to PqqE, in the pyrroloquinoline quinone (PQQ) biosynthetic pathway. The protein is PqqA binding protein of Pseudomonas paraeruginosa (strain DSM 24068 / PA7) (Pseudomonas aeruginosa (strain PA7)).